Consider the following 179-residue polypeptide: Large ribosomal subunit protein uL5 (179 aa).

The protein belongs to the universal ribosomal protein uL5 family. As to quaternary structure, part of the 50S ribosomal subunit; part of the 5S rRNA/L5/L18/L25 subcomplex. Contacts the 5S rRNA and the P site tRNA. Forms a bridge to the 30S subunit in the 70S ribosome.

This is one of the proteins that bind and probably mediate the attachment of the 5S RNA into the large ribosomal subunit, where it forms part of the central protuberance. In the 70S ribosome it contacts protein S13 of the 30S subunit (bridge B1b), connecting the 2 subunits; this bridge is implicated in subunit movement. Contacts the P site tRNA; the 5S rRNA and some of its associated proteins might help stabilize positioning of ribosome-bound tRNAs. The polypeptide is Large ribosomal subunit protein uL5 (Mannheimia succiniciproducens (strain KCTC 0769BP / MBEL55E)).